A 285-amino-acid chain; its full sequence is Bifunctional protein FolD (285 aa).

NADP(+) contacts are provided by residues 166-168 (GAS) and I232.

The protein belongs to the tetrahydrofolate dehydrogenase/cyclohydrolase family. In terms of assembly, homodimer.

It catalyses the reaction (6R)-5,10-methylene-5,6,7,8-tetrahydrofolate + NADP(+) = (6R)-5,10-methenyltetrahydrofolate + NADPH. The enzyme catalyses (6R)-5,10-methenyltetrahydrofolate + H2O = (6R)-10-formyltetrahydrofolate + H(+). It functions in the pathway one-carbon metabolism; tetrahydrofolate interconversion. Its function is as follows. Catalyzes the oxidation of 5,10-methylenetetrahydrofolate to 5,10-methenyltetrahydrofolate and then the hydrolysis of 5,10-methenyltetrahydrofolate to 10-formyltetrahydrofolate. This chain is Bifunctional protein FolD, found in Pseudoalteromonas atlantica (strain T6c / ATCC BAA-1087).